Consider the following 89-residue polypeptide: Large ribosomal subunit protein bL27 (89 aa).

The tract at residues 1–21 is disordered; sequence MAHKKAGGSSRNGRDSQSKRL.

This sequence belongs to the bacterial ribosomal protein bL27 family.

The polypeptide is Large ribosomal subunit protein bL27 (Rhizobium rhizogenes (strain K84 / ATCC BAA-868) (Agrobacterium radiobacter)).